Reading from the N-terminus, the 43-residue chain is Protein PsbN (43 aa).

Residues leucine 7–phenylalanine 27 form a helical membrane-spanning segment.

It belongs to the PsbN family.

It localises to the cellular thylakoid membrane. May play a role in photosystem I and II biogenesis. The protein is Protein PsbN of Synechococcus sp. (strain JA-3-3Ab) (Cyanobacteria bacterium Yellowstone A-Prime).